A 129-amino-acid chain; its full sequence is Iron-sulfur cluster assembly 1 homolog, mitochondrial (129 aa).

The transit peptide at 1 to 12 (MSASLVRATVRA) directs the protein to the mitochondrion. Fe cation-binding residues include C57, C121, and C123.

The protein belongs to the HesB/IscA family. In terms of assembly, interacts with CRY2, but not with CRY1 (in vitro).

It localises to the mitochondrion. Its function is as follows. Involved in the maturation of mitochondrial 4Fe-4S proteins functioning late in the iron-sulfur cluster assembly pathway. Probably involved in the binding of an intermediate of Fe/S cluster assembly. This chain is Iron-sulfur cluster assembly 1 homolog, mitochondrial (Isca1), found in Mus musculus (Mouse).